A 50-amino-acid chain; its full sequence is Disintegrin pyramidin-A (50 aa).

Residues 1–47 (DCASGPCCRDCKFLKEGTICKRARGDNMDDYCNGKTCDCPRNPHKGE) enclose the Disintegrin domain. Disulfide bonds link Cys2–Cys11, Cys7–Cys32, Cys8–Cys37, and Cys20–Cys39. The short motif at 24 to 26 (RGD) is the Cell attachment site element.

The protein belongs to the venom metalloproteinase (M12B) family. P-II subfamily. P-IIa sub-subfamily. As to quaternary structure, monomer (disintegrin). Expressed by the venom gland.

It localises to the secreted. Its function is as follows. Inhibits ADP-induced human platelet aggregation. This Echis pyramidum leakeyi (Leakey's carpet viper) protein is Disintegrin pyramidin-A.